A 289-amino-acid chain; its full sequence is Glycine--tRNA ligase alpha subunit (289 aa).

This sequence belongs to the class-II aminoacyl-tRNA synthetase family. Tetramer of two alpha and two beta subunits.

The protein localises to the cytoplasm. It catalyses the reaction tRNA(Gly) + glycine + ATP = glycyl-tRNA(Gly) + AMP + diphosphate. The polypeptide is Glycine--tRNA ligase alpha subunit (Prochlorococcus marinus (strain MIT 9515)).